A 347-amino-acid polypeptide reads, in one-letter code: Heat-inducible transcription repressor HrcA (347 aa).

The protein belongs to the HrcA family.

In terms of biological role, negative regulator of class I heat shock genes (grpE-dnaK-dnaJ and groELS operons). Prevents heat-shock induction of these operons. This Nocardia farcinica (strain IFM 10152) protein is Heat-inducible transcription repressor HrcA.